A 140-amino-acid polypeptide reads, in one-letter code: Thioredoxin H9 (140 aa).

Gly2 carries the N-myristoyl glycine lipid modification. Cys4 carries S-palmitoyl cysteine lipidation. Phosphoserine is present on Ser14. The Thioredoxin domain occupies 25–129 (VHLITTKESW…PELQKKVTSI (105 aa)). Catalysis depends on nucleophile residues Cys57 and Cys60. Cys57 and Cys60 are oxidised to a cystine. A Phosphoserine modification is found at Ser136.

Belongs to the thioredoxin family. Plant H-type subfamily. As to expression, ubiquitous.

It is found in the cell membrane. Probable thiol-disulfide oxidoreductase that may play a role in intercellular communication due to its ability to move from cell to cell. In Arabidopsis thaliana (Mouse-ear cress), this protein is Thioredoxin H9 (TRX9).